Reading from the N-terminus, the 128-residue chain is uncharacterized protein (128 aa).

Over residues Met1–Lys28 the composition is skewed to basic and acidic residues. The interval Met1 to Ser30 is disordered.

Its subcellular location is the cytoplasm. The protein localises to the nucleus. This is an uncharacterized protein from Schizosaccharomyces pombe (strain 972 / ATCC 24843) (Fission yeast).